Here is a 266-residue protein sequence, read N- to C-terminus: MKFTPGAVEDAPSYYVDHDNGKYNTQKCVILRNLGLEGDDIAMPASLNHLAKPTHILDLTNNDLVFFPDLHHRDDIETLLLSKNRLMVLDAALLPSKLKSLSLAFNGIENFETLIPLSHCPSTVRDLVLIGNPICHLSEYRQRILALVPSLEVLDFKLVSQAEKAQAVKDHVAVMKKIKEDNRQIHQRKKKALAAEVDGKNTFGRNTKSLTEAAKVTKPRDKTIEVMNTVVGKLTEEKKKKIREQLANASSMEELERLERLLTGGV.

LRR repeat units lie at residues 30–51, 53–74, 75–95, and 97–118; these read ILRN…NHLA, PTHI…HHRD, DIET…ALLP, and KLKS…IPLS. The LRRCT domain occupies 132–170; sequence NPICHLSEYRQRILALVPSLEVLDFKLVSQAEKAQAVKD.

It belongs to the U2 small nuclear ribonucleoprotein A family. In terms of assembly, associated with the spliceosome.

It is found in the nucleus. Its function is as follows. Involved in pre-mRNA splicing. The chain is U2 small nuclear ribonucleoprotein A' (LEA1) from Candida glabrata (strain ATCC 2001 / BCRC 20586 / JCM 3761 / NBRC 0622 / NRRL Y-65 / CBS 138) (Yeast).